Reading from the N-terminus, the 175-residue chain is Di-N-acetylchitobiase (175 aa).

The first 38 residues, 1–38 (MARLQLAGSRRLVPLPRRAPRLAPLLLPLLLALPDGAR), serve as a signal peptide directing secretion. The 137-residue stretch at 39–175 (ADCPCKVPAL…SFHHEIKGSQ (137 aa)) folds into the GH18 domain. An N-linked (GlcNAc...) asparagine glycan is attached at Asn-115. Residue Glu-143 is the Proton donor of the active site.

Belongs to the glycosyl hydrolase 18 family.

The protein localises to the lysosome. Involved in the degradation of asparagine-linked glycoproteins. Hydrolyze of N-acetyl-beta-D-glucosamine (1-4)N-acetylglucosamine chitobiose core from the reducing end of the bond, it requires prior cleavage by glycosylasparaginase. The chain is Di-N-acetylchitobiase (CTBS) from Bos taurus (Bovine).